Reading from the N-terminus, the 203-residue chain is Small ribosomal subunit protein uS10m (203 aa).

The transit peptide at 1–14 directs the protein to the mitochondrion; that stretch reads MLRNTIALRSFIRT. Phosphoserine is present on Ser-193.

Belongs to the universal ribosomal protein uS10 family. In terms of assembly, component of the mitochondrial small ribosomal subunit (mt-SSU). Mature yeast 74S mitochondrial ribosomes consist of a small (37S) and a large (54S) subunit. The 37S small subunit contains a 15S ribosomal RNA (15S mt-rRNA) and 34 different proteins. The 54S large subunit contains a 21S rRNA (21S mt-rRNA) and 46 different proteins.

It is found in the mitochondrion. Component of the mitochondrial ribosome (mitoribosome), a dedicated translation machinery responsible for the synthesis of mitochondrial genome-encoded proteins, including at least some of the essential transmembrane subunits of the mitochondrial respiratory chain. The mitoribosomes are attached to the mitochondrial inner membrane and translation products are cotranslationally integrated into the membrane. This is Small ribosomal subunit protein uS10m (RSM10) from Saccharomyces cerevisiae (strain ATCC 204508 / S288c) (Baker's yeast).